Reading from the N-terminus, the 344-residue chain is Phosphoserine phosphatase (344 aa).

The region spanning 48–120 (VVTILGKDRV…ERLGLDIVMQ (73 aa)) is the ACT domain. Catalysis depends on Asp-135, which acts as the Nucleophile. Mg(2+)-binding residues include Asp-135 and Asp-137. The active-site Proton donor is Asp-137. Substrate contacts are provided by residues Glu-144, Arg-180, 223–224 (SG), and Lys-268. Residue Asp-291 coordinates Mg(2+).

The protein belongs to the HAD-like hydrolase superfamily. SerB family. Mg(2+) is required as a cofactor.

It catalyses the reaction O-phospho-L-serine + H2O = L-serine + phosphate. The catalysed reaction is O-phospho-D-serine + H2O = D-serine + phosphate. The protein operates within amino-acid biosynthesis; L-serine biosynthesis; L-serine from 3-phospho-D-glycerate: step 3/3. The sequence is that of Phosphoserine phosphatase from Archaeoglobus fulgidus (strain ATCC 49558 / DSM 4304 / JCM 9628 / NBRC 100126 / VC-16).